A 174-amino-acid chain; its full sequence is NAD(P)H-quinone oxidoreductase subunit J (174 aa).

Belongs to the complex I 30 kDa subunit family. As to quaternary structure, NDH-1 can be composed of about 15 different subunits; different subcomplexes with different compositions have been identified which probably have different functions.

Its subcellular location is the cellular thylakoid membrane. It catalyses the reaction a plastoquinone + NADH + (n+1) H(+)(in) = a plastoquinol + NAD(+) + n H(+)(out). It carries out the reaction a plastoquinone + NADPH + (n+1) H(+)(in) = a plastoquinol + NADP(+) + n H(+)(out). Functionally, NDH-1 shuttles electrons from an unknown electron donor, via FMN and iron-sulfur (Fe-S) centers, to quinones in the respiratory and/or the photosynthetic chain. The immediate electron acceptor for the enzyme in this species is believed to be plastoquinone. Couples the redox reaction to proton translocation, and thus conserves the redox energy in a proton gradient. Cyanobacterial NDH-1 also plays a role in inorganic carbon-concentration. The sequence is that of NAD(P)H-quinone oxidoreductase subunit J from Picosynechococcus sp. (strain ATCC 27264 / PCC 7002 / PR-6) (Agmenellum quadruplicatum).